The primary structure comprises 82 residues: Exodeoxyribonuclease 7 small subunit (82 aa).

Belongs to the XseB family. In terms of assembly, heterooligomer composed of large and small subunits.

Its subcellular location is the cytoplasm. It catalyses the reaction Exonucleolytic cleavage in either 5'- to 3'- or 3'- to 5'-direction to yield nucleoside 5'-phosphates.. Its function is as follows. Bidirectionally degrades single-stranded DNA into large acid-insoluble oligonucleotides, which are then degraded further into small acid-soluble oligonucleotides. The chain is Exodeoxyribonuclease 7 small subunit from Coxiella burnetii (strain CbuG_Q212) (Coxiella burnetii (strain Q212)).